A 229-amino-acid chain; its full sequence is ACD11 homolog protein (229 aa).

An N-acylsphingoid base 1-phosphate is bound by residues E84, K88, R123, R127, and H166.

It belongs to the GLTP family.

The chain is ACD11 homolog protein from Arabidopsis thaliana (Mouse-ear cress).